The following is a 194-amino-acid chain: ATP-dependent Clp protease proteolytic subunit (194 aa).

The active-site Nucleophile is S99. The active site involves H124.

The protein belongs to the peptidase S14 family. Fourteen ClpP subunits assemble into 2 heptameric rings which stack back to back to give a disk-like structure with a central cavity, resembling the structure of eukaryotic proteasomes.

Its subcellular location is the cytoplasm. It carries out the reaction Hydrolysis of proteins to small peptides in the presence of ATP and magnesium. alpha-casein is the usual test substrate. In the absence of ATP, only oligopeptides shorter than five residues are hydrolyzed (such as succinyl-Leu-Tyr-|-NHMec, and Leu-Tyr-Leu-|-Tyr-Trp, in which cleavage of the -Tyr-|-Leu- and -Tyr-|-Trp bonds also occurs).. Its function is as follows. Cleaves peptides in various proteins in a process that requires ATP hydrolysis. Has a chymotrypsin-like activity. Plays a major role in the degradation of misfolded proteins. The polypeptide is ATP-dependent Clp protease proteolytic subunit (Clostridium perfringens (strain ATCC 13124 / DSM 756 / JCM 1290 / NCIMB 6125 / NCTC 8237 / Type A)).